The sequence spans 839 residues: MGPRAKTICSLFFLLWVLAEPAENSDFYLPGDYLLGGLFSLHANMKGIVHLNFLQVPMCKEYEVKVIGYNLMQAMRFAVEEINNDSSLLPGVLLGYEIVDVCYISNNVQPVLYFLAHEDNLLPIQEDYSNYISRVVAVIGPDNSESVMTVANFLSLFLLPQITYSAIGDELRDKVRFPALLRTTPSADHHVEAMVQLMLHFRWNWIIVLVSSDTYGRDNGQLLGERLARRDICIAFQETLPALQPNQNMTSEERQRLVTIVDKLQQSTARVVVVFSPDLSLYDFFNEVLRQNFTGAVWIASESWAIDPVLHNLTELRHLGTFLGITIQSVPIPGFSEFREWGPQAGPPPLSRTSQSYTCNQECDNCLNATLSFNTILRLSGERVVYSVYSAVYAVAHALHSLLGCDNSTCTKRVVYPWQLLEEIWKVNFTLLDHQIFFDPQGDVALHLEIVQWQWDRSQNPFQSVASYYPLQRQLKNIQDISWHTINNTIPVSMCSKRCQSGQKKKPVGIHVCCFECIDCLPGTFLNHTEDEYECQACPNNEWSYQSETSCFKRQLVFLEWHEAPTIAVALLAALGFLSTLAILVIFWRHFQTPIVRSAGGPMCFLMLTLLLVAYMVVPVYVGPPKVSTCLCRQALFPLCFTICISCIAVRSFQIVCAFKMASRFPRAYSYWVRYQGPYVSMAFITVLKMVIVVIGMLATGLSPTTRTDPDDPKITIVSCNPNYRNSLLFNTSLDLLLSVVGFSFAYMGKELPTNYNEAKFITLSMTFYFTSSVSLCTFMSAYSGVLVTIVDLLVTVLNLLAISLGYFGPKCYMILFYPERNTSAYFNSMIQGYTMRRD.

Positions 1 to 19 (MGPRAKTICSLFFLLWVLA) are cleaved as a signal peptide. At 20 to 566 (EPAENSDFYL…VFLEWHEAPT (547 aa)) the chain is on the extracellular side. 9 N-linked (GlcNAc...) asparagine glycosylation sites follow: Asn84, Asn248, Asn292, Asn312, Asn368, Asn407, Asn428, Asn487, and Asn527. The chain crosses the membrane as a helical span at residues 567–587 (IAVALLAALGFLSTLAILVIF). Topologically, residues 588-602 (WRHFQTPIVRSAGGP) are cytoplasmic. Residues 603–623 (MCFLMLTLLLVAYMVVPVYVG) form a helical membrane-spanning segment. Residues 624–635 (PPKVSTCLCRQA) lie on the Extracellular side of the membrane. Residues 636-656 (LFPLCFTICISCIAVRSFQIV) form a helical membrane-spanning segment. At 657 to 681 (CAFKMASRFPRAYSYWVRYQGPYVS) the chain is on the cytoplasmic side. A helical transmembrane segment spans residues 682 to 702 (MAFITVLKMVIVVIGMLATGL). Residues 703–727 (SPTTRTDPDDPKITIVSCNPNYRNS) lie on the Extracellular side of the membrane. Residues 728–748 (LLFNTSLDLLLSVVGFSFAYM) form a helical membrane-spanning segment. The Cytoplasmic portion of the chain corresponds to 749–760 (GKELPTNYNEAK). The chain crosses the membrane as a helical span at residues 761-781 (FITLSMTFYFTSSVSLCTFMS). Residues 782 to 784 (AYS) lie on the Extracellular side of the membrane. The helical transmembrane segment at 785–805 (GVLVTIVDLLVTVLNLLAISL) threads the bilayer. At 806–839 (GYFGPKCYMILFYPERNTSAYFNSMIQGYTMRRD) the chain is on the cytoplasmic side.

It belongs to the G-protein coupled receptor 3 family. TAS1R subfamily. As to quaternary structure, forms heterodimers with TAS1R3.

Its subcellular location is the cell membrane. Its function is as follows. Putative taste receptor. TAS1R2/TAS1R3 recognizes diverse natural and synthetic sweeteners. This is Taste receptor type 1 member 2 (TAS1R2) from Pan troglodytes (Chimpanzee).